A 512-amino-acid chain; its full sequence is Glycosyltransferase sdnJ (512 aa).

An N-terminal signal peptide occupies residues 1–24; the sequence is MHAKRPSVLFFTISDFGYVNVVLA. A glycan (N-linked (GlcNAc...) asparagine) is linked at N207.

Belongs to the UDP-glycosyltransferase family.

The catalysed reaction is sordaricin + GDP-6-deoxy-alpha-D-altrose = 4'-O-demethylsordarin + GDP + H(+). The protein operates within antibiotic biosynthesis. Its function is as follows. Glycosyltransferase; part of the gene cluster that mediates the biosynthesis of sordarin and hypoxysordarin, glycoside antibiotics with a unique tetracyclic diterpene aglycone structure. First, the geranylgeranyl diphosphate synthase sdnC constructs GGDP from farnesyl diphosphate and isopentenyl diphosphate. The diterpene cyclase sdnA then catalyzes the cyclization of GGDP to afford cycloaraneosene. Cycloaraneosene is then hydroxylated four times by the putative cytochrome P450 monooxygenases sdnB, sdnE, sdnF and sdnH to give a hydroxylated cycloaraneosene derivative such as cycloaraneosene-8,9,13,19-tetraol. Although the order of the hydroxylations is unclear, at least C8, C9 and C13 of the cycloaraneosene skeleton are hydroxylated before the sordaricin formation. Dehydration of the 13-hydroxy group of the hydroxylated cycloaraneosene derivative might be catalyzed by an unassigned hypothetical protein such as sdnG and sdnP to construct the cyclopentadiene moiety. The FAD-dependent oxidoreductase sdnN is proposed to catalyze the oxidation at C9 of the hydroxylated cycloaraneosene derivative and also catalyze the Baeyer-Villiger oxidation to give the lactone intermediate. The presumed lactone intermediate would be hydrolyzed to give an acrolein moiety and a carboxylate moiety. Then, [4+2]cycloaddition would occur between the acrolein moiety and the cyclopentadiene moiety to give sordaricin. SdnN might also be involved in the [4+2]cycloaddition after the hypothesized oxidation to accommodate the oxidized product and prompt the [4+2]cycloaddition. GDP-6-deoxy-D-altrose may be biosynthesized from GDP-D-mannose by the putative GDP-mannose-4,6-dehydratase sdnI and the short-chain dehydrogenase sdnK. The glycosyltransferase sdnJ catalyzes the attachment of 6-deoxy-D-altrose onto the 19-hydroxy group of sordaricin to give 4'-O-demethylsordarin. The methyltransferase sdnD would complete the biosynthesis of sordarin. Sordarin can be further modified into hypoxysordarin. The unique acyl chain at the 3'-hydroxy group of hypoxysordarin would be constructed by an iterative type I PKS sdnO and the trans-acting polyketide methyltransferase sdnL. SdnL would be responsible for the introduction of an alpha-methyl group of the polyketide chain. Alternatively, the beta-lactamase-like protein sdnR might be responsible for the cleavage and transfer of the polyketide chain from the PKS sdnO to sordarin. Two putative cytochrome P450 monooxygenases, sdnQ and sdnT, might catalyze the epoxidations of the polyketide chain to complete the biosynthesis of hypoxysordarin. Transcriptional regulators sdnM and sdnS are presumably encoded for the transcriptional regulation of the expression of the sdn gene cluster. The protein is Glycosyltransferase sdnJ of Sordaria araneosa (Pleurage araneosa).